Here is a 116-residue protein sequence, read N- to C-terminus: Large ribosomal subunit protein uL18 (116 aa).

It belongs to the universal ribosomal protein uL18 family. Part of the 50S ribosomal subunit; part of the 5S rRNA/L5/L18/L25 subcomplex. Contacts the 5S and 23S rRNAs.

In terms of biological role, this is one of the proteins that bind and probably mediate the attachment of the 5S RNA into the large ribosomal subunit, where it forms part of the central protuberance. This is Large ribosomal subunit protein uL18 from Hahella chejuensis (strain KCTC 2396).